The chain runs to 65 residues: UPF0434 protein bsr0601 (65 aa).

This sequence belongs to the UPF0434 family.

This is UPF0434 protein bsr0601 from Bradyrhizobium diazoefficiens (strain JCM 10833 / BCRC 13528 / IAM 13628 / NBRC 14792 / USDA 110).